Reading from the N-terminus, the 287-residue chain is MVLIKEFRIPLPLTVEEYKVAQLFMVATISKKNTSLGEGIEVIENKPYADGATTGFFTRKIFHLGGRLPTWLRSFAPTSLQIEEKAWNAYPYCKTSYACPLLGDRFSVSIETRYEPDSGTQDNCLNLNSEELSIREVEHIDIVNDPIDEAHYKPEEDPKIFQSVKTGRGKLQNDWMKSTKPIMCCYKVCKVEFRCWGVQNKVENFIQRVALRDTFFMGHRQIFCWIDQWFDMDMESLREFEKKTNEEMKAQFHNNNNNNSNNSNNNNNNNTQPQRSSFFSRSTDGNK.

The segment at 252-287 (FHNNNNNNSNNSNNNNNNNTQPQRSSFFSRSTDGNK) is disordered. Low complexity predominate over residues 254–270 (NNNNNNSNNSNNNNNNN). The segment covering 271-287 (TQPQRSSFFSRSTDGNK) has biased composition (polar residues).

The protein belongs to the PtdIns transfer protein family. PI transfer class IIA subfamily.

Phosphatidylinositol transfer proteins mediate the monomeric transport of lipids by shielding a lipid from the aqueous environment and binding the lipid in a hydrophobic cavity. This is Phosphatidylinositol transfer protein 5 (pitE) from Dictyostelium discoideum (Social amoeba).